The following is a 76-amino-acid chain: Kappa-actitoxin-Avd4e (76 aa).

The signal sequence occupies residues 1-19 (MNKALFLCLVVLCAAVVFA). Residues 20–31 (AEDLQKAKHAPF) constitute a propeptide that is removed on maturation. 3 disulfides stabilise this stretch: Cys37–Cys72, Cys39–Cys65, and Cys55–Cys73. The short motif at 45-47 (RGD) is the Cell attachment site element.

This sequence belongs to the sea anemone type 3 (BDS) potassium channel toxin family. As to expression, moderately expressed in the ectodermal tissue from the distal and proximal tentacles, body wall, and oral disk.

It is found in the secreted. Its subcellular location is the nematocyst. In terms of biological role, is member of a fraction that shows antiangiogenic activity, since it inhibits human microvascular endothelial cells (HMEC) tubulogenesis. This protein could be a kunitz-type inhibitor with a RGD motif that could block angiogenesis in binding on integrins. Blocks Kv3 voltage-gated potassium channels. Reduces blood pressure. The chain is Kappa-actitoxin-Avd4e from Anemonia viridis (Snakelocks anemone).